The following is an 82-amino-acid chain: Putative Fe(2+) transport protein A (82 aa).

The protein belongs to the FeoA family.

Functionally, might be involved in Fe(2+) ion uptake. This is Putative Fe(2+) transport protein A from Leptolyngbya boryana (Plectonema boryanum).